The sequence spans 242 residues: Type III pantothenate kinase (242 aa).

7-14 serves as a coordination point for ATP; sequence DLGNSRFK. Residues Tyr91 and 98 to 101 contribute to the substrate site; that span reads GVDR. The active-site Proton acceptor is Asp100. Thr121 contacts ATP. Thr171 is a binding site for substrate.

The protein belongs to the type III pantothenate kinase family. In terms of assembly, homodimer. The cofactor is NH4(+). Requires K(+) as cofactor.

It localises to the cytoplasm. The enzyme catalyses (R)-pantothenate + ATP = (R)-4'-phosphopantothenate + ADP + H(+). It participates in cofactor biosynthesis; coenzyme A biosynthesis; CoA from (R)-pantothenate: step 1/5. Catalyzes the phosphorylation of pantothenate (Pan), the first step in CoA biosynthesis. The polypeptide is Type III pantothenate kinase (Xanthomonas campestris pv. campestris (strain 8004)).